A 436-amino-acid chain; its full sequence is Trigger factor (436 aa).

The PPIase FKBP-type domain occupies 161 to 246; it reads GDQLNIDFVG…VNSVSEAELP (86 aa).

The protein belongs to the FKBP-type PPIase family. Tig subfamily.

Its subcellular location is the cytoplasm. It carries out the reaction [protein]-peptidylproline (omega=180) = [protein]-peptidylproline (omega=0). Involved in protein export. Acts as a chaperone by maintaining the newly synthesized protein in an open conformation. Functions as a peptidyl-prolyl cis-trans isomerase. In Azotobacter vinelandii (strain DJ / ATCC BAA-1303), this protein is Trigger factor.